Here is a 221-residue protein sequence, read N- to C-terminus: Large ribosomal subunit protein uL3 (221 aa).

The protein belongs to the universal ribosomal protein uL3 family. In terms of assembly, part of the 50S ribosomal subunit. Forms a cluster with proteins L14 and L19.

One of the primary rRNA binding proteins, it binds directly near the 3'-end of the 23S rRNA, where it nucleates assembly of the 50S subunit. The polypeptide is Large ribosomal subunit protein uL3 (Chlamydia felis (strain Fe/C-56) (Chlamydophila felis)).